Here is a 348-residue protein sequence, read N- to C-terminus: 4-hydroxy-2-oxovalerate aldolase 1 (348 aa).

The region spanning 8 to 260 is the Pyruvate carboxyltransferase domain; the sequence is ITVHDMTLRD…QTGVDVWAIQ (253 aa). 16–17 lines the substrate pocket; the sequence is RD. A Mn(2+)-binding site is contributed by D17. The active-site Proton acceptor is the H20. Substrate-binding residues include S170 and H199. Positions 199 and 201 each coordinate Mn(2+). Y290 contributes to the substrate binding site.

This sequence belongs to the 4-hydroxy-2-oxovalerate aldolase family.

The enzyme catalyses (S)-4-hydroxy-2-oxopentanoate = acetaldehyde + pyruvate. This Cupriavidus metallidurans (strain ATCC 43123 / DSM 2839 / NBRC 102507 / CH34) (Ralstonia metallidurans) protein is 4-hydroxy-2-oxovalerate aldolase 1.